A 631-amino-acid chain; its full sequence is Nucleoside triphosphatase I (631 aa).

One can recognise a Helicase ATP-binding domain in the interval 42–204; that stretch reads FLGLDTMHSI…TMIVNLLRPK (163 aa). ATP is bound at residue 55–62; the sequence is HDTGVGKT. The DEXH box motif lies at 141–144; sequence DECH. Residues 367–536 enclose the Helicase C-terminal domain; it reads KFTEVCLKIL…LFKVFKESSI (170 aa). The interval 457–524 is binding to the cap-specific mRNA (nucleoside-2'-O-)-methyltransferase; the sequence is DIFILDMTWN…NIIKTKSKEF (68 aa).

The protein belongs to the helicase family. NPH I subfamily. Monomer. Interacts (via C-terminus) with RAP94 (via N-terminus). Interacts with the cap-specific mRNA (nucleoside-2'-O-)-methyltransferase.

The protein resides in the virion. The enzyme catalyses a ribonucleoside 5'-triphosphate + H2O = a ribonucleoside 5'-diphosphate + phosphate + H(+). Its function is as follows. DNA-dependent ATPase required for providing the needed energy to achieve the termination of early transcripts. Acts in concert with the RAP94 subunit of the virion RNA polymerase and the capping enzyme/VTF to catalyze release of UUUUUNU-containing nascent RNA from the elongation complex. NPH-I must bind ssDNA in order to exhibit ATPase activity. The chain is Nucleoside triphosphatase I (NPH1) from Erythrocebus patas (Red guenon).